The following is a 123-amino-acid chain: Secreted LysM effector Lys1 (123 aa).

Positions 1-20 (MMGLAKTLLLASQLTAVVVA) are cleaved as a signal peptide. The region spanning 72–118 (KFCWVQAGNKCYQVAMENHISLADFLKWNPGAGSDCRTLWANTYACV) is the LysM domain.

This sequence belongs to the secreted LysM effector family.

In terms of biological role, might have a role in sequestration of chitin oligosaccharides (breakdown products of fungal cell walls that are released during invasion and act as triggers of host immunity) to dampen host defense. The protein is Secreted LysM effector Lys1 of Pochonia chlamydosporia (strain 123) (Metacordyceps chlamydosporia).